We begin with the raw amino-acid sequence, 157 residues long: MPRRRVAAKREILDDPKYGSQILAKFMNHVMESGKKAVAERIVYGALETVAARKTGTDPLELFEKALDAIAPLVEVKSRRVGGATYQVPVEVRPSRRNALAMRWLVDFARKRGEKSMALRLAGELLDAAEGKGAAVKKREDVHRMAEANKAFSHYRF.

It belongs to the universal ribosomal protein uS7 family. Part of the 30S ribosomal subunit. Contacts proteins S9 and S11.

One of the primary rRNA binding proteins, it binds directly to 16S rRNA where it nucleates assembly of the head domain of the 30S subunit. Is located at the subunit interface close to the decoding center, probably blocks exit of the E-site tRNA. The chain is Small ribosomal subunit protein uS7 from Pseudomonas fluorescens (strain Pf0-1).